Consider the following 132-residue polypeptide: NADPH-dependent 7-cyano-7-deazaguanine reductase (132 aa).

Cys43 serves as the catalytic Thioimide intermediate. The active-site Proton donor is Asp50. Substrate contacts are provided by residues 65–67 (VEL) and 84–85 (HE).

The protein belongs to the GTP cyclohydrolase I family. QueF type 1 subfamily.

It is found in the cytoplasm. It carries out the reaction 7-aminomethyl-7-carbaguanine + 2 NADP(+) = 7-cyano-7-deazaguanine + 2 NADPH + 3 H(+). It functions in the pathway tRNA modification; tRNA-queuosine biosynthesis. Functionally, catalyzes the NADPH-dependent reduction of 7-cyano-7-deazaguanine (preQ0) to 7-aminomethyl-7-deazaguanine (preQ1). The protein is NADPH-dependent 7-cyano-7-deazaguanine reductase of Thermosynechococcus vestitus (strain NIES-2133 / IAM M-273 / BP-1).